We begin with the raw amino-acid sequence, 887 residues long: Bifunctional uridylyltransferase/uridylyl-removing enzyme (887 aa).

Residues methionine 1 to isoleucine 329 form a uridylyltransferase region. The interval isoleucine 330–valine 686 is uridylyl-removing. An HD domain is found at valine 448 to leucine 570. ACT domains lie at glutamate 687–serine 772 and valine 796–proline 871. The interval threonine 864–arginine 887 is disordered.

The protein belongs to the GlnD family. The cofactor is Mg(2+).

It carries out the reaction [protein-PII]-L-tyrosine + UTP = [protein-PII]-uridylyl-L-tyrosine + diphosphate. The enzyme catalyses [protein-PII]-uridylyl-L-tyrosine + H2O = [protein-PII]-L-tyrosine + UMP + H(+). Uridylyltransferase (UTase) activity is inhibited by glutamine, while glutamine activates uridylyl-removing (UR) activity. Functionally, modifies, by uridylylation and deuridylylation, the PII regulatory proteins (GlnB and homologs), in response to the nitrogen status of the cell that GlnD senses through the glutamine level. Under low glutamine levels, catalyzes the conversion of the PII proteins and UTP to PII-UMP and PPi, while under higher glutamine levels, GlnD hydrolyzes PII-UMP to PII and UMP (deuridylylation). Thus, controls uridylylation state and activity of the PII proteins, and plays an important role in the regulation of nitrogen assimilation and metabolism. The chain is Bifunctional uridylyltransferase/uridylyl-removing enzyme from Nitrosospira multiformis (strain ATCC 25196 / NCIMB 11849 / C 71).